A 382-amino-acid chain; its full sequence is Chaperone protein DnaJ 2 (382 aa).

Residues 4–68 enclose the J domain; sequence DYYGLLGVSK…DKRRIVDLGG (65 aa). Residues 132–214 form a CR-type zinc finger; the sequence is GVTKQVTVDT…CMGDGRIRAR (83 aa). Zn(2+) is bound by residues cysteine 145, cysteine 148, cysteine 162, cysteine 165, cysteine 188, cysteine 191, cysteine 202, and cysteine 205. CXXCXGXG motif repeat units follow at residues 145–152, 162–169, 188–195, and 202–209; these read CDRCQGKG, CDTCGGRG, CPTCRGVG, and CQQCMGDG.

The protein belongs to the DnaJ family. As to quaternary structure, homodimer. Interacts with RNase J. Zn(2+) serves as cofactor.

It is found in the cytoplasm. Its function is as follows. Participates actively in the response to hyperosmotic and heat shock by preventing the aggregation of stress-denatured proteins and by disaggregating proteins, also in an autonomous, DnaK-independent fashion. Unfolded proteins bind initially to DnaJ; upon interaction with the DnaJ-bound protein, DnaK hydrolyzes its bound ATP, resulting in the formation of a stable complex. GrpE releases ADP from DnaK; ATP binding to DnaK triggers the release of the substrate protein, thus completing the reaction cycle. Several rounds of ATP-dependent interactions between DnaJ, DnaK and GrpE are required for fully efficient folding. Also involved, together with DnaK and GrpE, in the DNA replication of plasmids through activation of initiation proteins. Inhibits the beta-lactamase and RNase activity of RNase J. This chain is Chaperone protein DnaJ 2, found in Mycobacterium tuberculosis (strain ATCC 25618 / H37Rv).